A 283-amino-acid chain; its full sequence is MLLKCVCRAGIISIKGIFPRWYSNSQKVANLGQITDYLVVKGVPNLLQKMFKESVLADNVVFRLFPTSHPYIPVLHGKSKYMASLNAMRMIVRKFILGDECRLHISSVKTLTSTSHDEEVKSALQSYNTITCNDKLVIKWQSCIPEDHCKITKLEINDRLKEEKRGNGAGGSFSMRSVPVIDYILHPTANNLNQSVISEYLENAAERSMENKVNETQNSKEDEKKKNDGDGKRSKKKRLSRLIKGTFIFEFNEENSKILVHTIEDVELIHYEKKIATRGAFAC.

A compositionally biased stretch (basic and acidic residues) spans 208–232 (SMENKVNETQNSKEDEKKKNDGDGK). Residues 208-237 (SMENKVNETQNSKEDEKKKNDGDGKRSKKK) form a disordered region.

This is an uncharacterized protein from Saccharomyces cerevisiae (strain ATCC 204508 / S288c) (Baker's yeast).